The following is a 138-amino-acid chain: Acidic phospholipase A2 Cvv-E6e (138 aa).

The signal sequence occupies residues 1–16; that stretch reads MRTLWILAVLLLGVEG. Disulfide bonds link cysteine 42–cysteine 131, cysteine 44–cysteine 60, cysteine 59–cysteine 111, cysteine 65–cysteine 138, cysteine 66–cysteine 104, cysteine 73–cysteine 97, and cysteine 91–cysteine 102. Positions 43, 45, and 47 each coordinate Ca(2+). Histidine 63 is an active-site residue. Aspartate 64 provides a ligand contact to Ca(2+). The active site involves aspartate 105.

Requires Ca(2+) as cofactor. Expressed by the venom gland.

It is found in the secreted. It carries out the reaction a 1,2-diacyl-sn-glycero-3-phosphocholine + H2O = a 1-acyl-sn-glycero-3-phosphocholine + a fatty acid + H(+). Its function is as follows. Snake venom phospholipase A2 (PLA2) that significantly inhibits ADP-induced platelet aggregation in platelet-rich plasma of human, rabbit and guinea pig. PLA2 catalyzes the calcium-dependent hydrolysis of the 2-acyl groups in 3-sn-phosphoglycerides. The polypeptide is Acidic phospholipase A2 Cvv-E6e (Crotalus viridis viridis (Prairie rattlesnake)).